Reading from the N-terminus, the 421-residue chain is Trimethyllysine dioxygenase, mitochondrial (421 aa).

A mitochondrion-targeting transit peptide spans 1–15; sequence MWCHRLSHLQSRLQD. Position 236 is an N6-acetyllysine (lysine 236). Residues histidine 242, aspartate 244, and histidine 389 each coordinate Fe cation.

This sequence belongs to the gamma-BBH/TMLD family. Homodimer. Fe(2+) serves as cofactor. The cofactor is L-ascorbate.

It is found in the mitochondrion matrix. It catalyses the reaction N(6),N(6),N(6)-trimethyl-L-lysine + 2-oxoglutarate + O2 = (3S)-3-hydroxy-N(6),N(6),N(6)-trimethyl-L-lysine + succinate + CO2. Its pathway is amine and polyamine biosynthesis; carnitine biosynthesis. Its function is as follows. Converts trimethyllysine (TML) into hydroxytrimethyllysine (HTML). The sequence is that of Trimethyllysine dioxygenase, mitochondrial (TMLHE) from Bos taurus (Bovine).